The following is a 163-amino-acid chain: Adenosine 5'-monophosphoramidase HINT2 (163 aa).

Residues 1–17 constitute a mitochondrion transit peptide; that stretch reads MAAAVVLAAGLCVARRA. An HIT domain is found at 55–163; it reads IFSRILDRSL…GGRQLQWPPG (109 aa). AMP-binding residues include serine 63 and aspartate 80. At lysine 119 the chain carries N6-acetyllysine. Asparagine 136 lines the AMP pocket. Lysine 139 bears the N6-acetyllysine mark. Residues 142 to 145 and 149 to 151 each bind AMP; these read AQSV and HIH. Residues 147–151 carry the Histidine triad motif motif; the sequence is HLHIH. The active-site Tele-AMP-histidine intermediate is histidine 149.

It belongs to the HINT family.

It is found in the mitochondrion. It catalyses the reaction adenosine 5'-phosphoramidate + H2O = AMP + NH4(+). Its function is as follows. Exhibits adenosine 5'-monophosphoramidase activity, hydrolyzing purine nucleotide phosphoramidates with a single phosphate group such as adenosine 5'monophosphoramidate (AMP-NH2) to yield AMP and NH2. Hydrolyzes adenosine 5'-O-p-nitrophenylphosphoramidate (AMP-pNA). May be involved in steroid biosynthesis. May play a role in apoptosis. The polypeptide is Adenosine 5'-monophosphoramidase HINT2 (Bos taurus (Bovine)).